The following is a 183-amino-acid chain: uncharacterized protein (183 aa).

3 disordered regions span residues 1–44, 68–137, and 163–183; these read MPFY…VMTA, GRAG…LGLR, and RDDP…VWPE.

This is an uncharacterized protein from Dryophytes versicolor (chameleon treefrog).